We begin with the raw amino-acid sequence, 155 residues long: Small ribosomal subunit protein uS7 (155 aa).

The protein belongs to the universal ribosomal protein uS7 family. As to quaternary structure, part of the 30S ribosomal subunit. Contacts proteins S9 and S11.

In terms of biological role, one of the primary rRNA binding proteins, it binds directly to 16S rRNA where it nucleates assembly of the head domain of the 30S subunit. Is located at the subunit interface close to the decoding center, probably blocks exit of the E-site tRNA. This chain is Small ribosomal subunit protein uS7, found in Sulfurovum sp. (strain NBC37-1).